The following is a 101-amino-acid chain: Apolipoprotein C-II (101 aa).

An N-terminal signal peptide occupies residues M1–G22. Residues A23–Q28 constitute a propeptide, removed in mature form. Residues A66 to L74 form a lipid binding region. The tract at residues S78 to E101 is lipoprotein lipase cofactor.

This sequence belongs to the apolipoprotein C2 family. Proapolipoprotein C-II is synthesized as a sialic acid containing glycoprotein which is subsequently desialylated prior to its proteolytic processing. Post-translationally, proapolipoprotein C-II, the major form found in plasma undergoes proteolytic cleavage of its N-terminal hexapeptide to generate apolipoprotein C-II, which occurs as the minor form in plasma.

The protein resides in the secreted. Component of chylomicrons, very low-density lipoproteins (VLDL), low-density lipoproteins (LDL), and high-density lipoproteins (HDL) in plasma. Plays an important role in lipoprotein metabolism as an activator of lipoprotein lipase. Both proapolipoprotein C-II and apolipoprotein C-II can activate lipoprotein lipase. The polypeptide is Apolipoprotein C-II (APOC2) (Papio anubis (Olive baboon)).